A 440-amino-acid polypeptide reads, in one-letter code: Phosphatidylcholine-sterol acyltransferase (440 aa).

The signal sequence occupies residues 1–24; sequence MGLPGSPWQWVLLLLGLLLPPATS. Asn-44 carries an N-linked (GlcNAc...) asparagine glycan. A disulfide bridge links Cys-74 with Cys-98. An N-linked (GlcNAc...) asparagine glycan is attached at Asn-108. The active-site Nucleophile is the Ser-205. Asn-296 carries an N-linked (GlcNAc...) asparagine glycan. A disulfide bond links Cys-337 and Cys-380. The active-site Charge relay system is Asp-369. A glycan (N-linked (GlcNAc...) asparagine) is linked at Asn-397. Catalysis depends on His-401, which acts as the Charge relay system. A glycan (N-linked (GlcNAc...) asparagine) is linked at Asn-408.

It belongs to the AB hydrolase superfamily. Lipase family. Detected in blood plasma (at protein level).

The protein resides in the secreted. It catalyses the reaction a sterol + a 1,2-diacyl-sn-glycero-3-phosphocholine = a sterol ester + a 1-acyl-sn-glycero-3-phosphocholine. It carries out the reaction a 1-O-alkyl-2-acetyl-sn-glycero-3-phosphocholine + H2O = a 1-O-alkyl-sn-glycero-3-phosphocholine + acetate + H(+). The catalysed reaction is 1-hexadecanoyl-2-(9Z,12Z-octadecadienoyl)-sn-glycero-3-phosphocholine + H2O = (9Z,12Z)-octadecadienoate + 1-hexadecanoyl-sn-glycero-3-phosphocholine + H(+). The enzyme catalyses 1-hexadecanoyl-2-(5Z,8Z,11Z,14Z-eicosatetraenoyl)-sn-glycero-3-phosphocholine + H2O = 1-hexadecanoyl-sn-glycero-3-phosphocholine + (5Z,8Z,11Z,14Z)-eicosatetraenoate + H(+). It catalyses the reaction 1-hexadecanoyl-2-(5Z,8Z,11Z,14Z-eicosatetraenoyl)-sn-glycero-3-phosphocholine + cholesterol = cholesteryl (5Z,8Z,11Z,14Z)-eicosatetraenoate + 1-hexadecanoyl-sn-glycero-3-phosphocholine. It carries out the reaction 1-hexadecanoyl-2-(9Z-octadecenoyl)-sn-glycero-3-phosphocholine + cholesterol = cholesteryl (9Z-octadecenoate) + 1-hexadecanoyl-sn-glycero-3-phosphocholine. The catalysed reaction is a 1-hexadecanoyl-2-acyl-sn-glycero-3-phosphocholine + (24S)-hydroxycholesterol = (24S)-24-hydroxycholesterol ester + 1-hexadecanoyl-sn-glycero-3-phosphocholine. The enzyme catalyses (24S)-hydroxycholesterol + 1-hexadecanoyl-2-(9Z,12Z-octadecadienoyl)-sn-glycero-3-phosphocholine = (24S)-hydroxycholesterol 3-linoleoate + 1-hexadecanoyl-sn-glycero-3-phosphocholine. It catalyses the reaction 1-hexadecanoyl-2-(8Z,11Z,14Z-eicosatrienoyl)-sn-glycero-3-phosphocholine + cholesterol = cholesteryl (8Z,11Z,14Z)-eicosatrienoate + 1-hexadecanoyl-sn-glycero-3-phosphocholine. It carries out the reaction 1-hexadecanoyl-2-(5Z,8Z,11Z-eicosatrienoyl)-sn-glycero-3-phosphocholine + cholesterol = cholesteryl (5Z,8Z,11Z)-eicosatrienoate + 1-hexadecanoyl-sn-glycero-3-phosphocholine. The catalysed reaction is 1-hexadecanoyl-2-(5Z,8Z,11Z,14Z,17Z-eicosapentaenoyl)-sn-glycero-3-phosphocholine + cholesterol = (5Z,8Z,11Z,14Z,17Z-eicosapentaenoyl)-cholesterol + 1-hexadecanoyl-sn-glycero-3-phosphocholine. The enzyme catalyses 1-hexadecanoyl-2-(9Z,12Z-octadecadienoyl)-sn-glycero-3-phosphocholine + cholesterol = cholesteryl (9Z,12Z)-octadecadienoate + 1-hexadecanoyl-sn-glycero-3-phosphocholine. It catalyses the reaction 1-hexadecanoyl-2-(6Z,9Z,12Z-octadecatrienoyl)-sn-glycero-3-phosphocholine + cholesterol = (6Z,9Z,12Z-octadecatrienoyl)-cholesterol + 1-hexadecanoyl-sn-glycero-3-phosphocholine. It carries out the reaction 1-hexadecanoyl-2-(11Z,14Z,17Z-eicosatrienoyl)-sn-glycero-3-phosphocholine + cholesterol = (11Z,14Z,17Z-eicosatrienoyl)-cholesterol + 1-hexadecanoyl-sn-glycero-3-phosphocholine. The catalysed reaction is 1-hexadecanoyl-2-(9Z,12Z,15Z-octadecatrienoyl)-sn-glycero-3-phosphocholine + cholesterol = (9Z,12Z,15Z-octadecatrienoyl)-cholesterol + 1-hexadecanoyl-sn-glycero-3-phosphocholine. The enzyme catalyses a 1-O-alkyl-2-acetyl-sn-glycero-3-phosphocholine + 1-hexadecanoyl-sn-glycero-3-phosphocholine = 1-hexadecanoyl-2-acetyl-sn-glycero-3-phosphocholine + a 1-O-alkyl-sn-glycero-3-phosphocholine. Functionally, central enzyme in the extracellular metabolism of plasma lipoproteins. Synthesized mainly in the liver and secreted into plasma where it converts cholesterol and phosphatidylcholines (lecithins) to cholesteryl esters and lysophosphatidylcholines on the surface of high and low density lipoproteins (HDLs and LDLs). The cholesterol ester is then transported back to the liver. Also produced in the brain by primary astrocytes, and esterifies free cholesterol on nascent APOE-containing lipoproteins secreted from glia and influences cerebral spinal fluid (CSF) APOE- and APOA1 levels. Together with APOE and the cholesterol transporter ABCA1, plays a key role in the maturation of glial-derived, nascent lipoproteins. Required for remodeling high-density lipoprotein particles into their spherical forms. Has a preference for plasma 16:0-18:2 or 18:O-18:2 phosphatidylcholines. Catalyzes the hydrolysis of 1-O-alkyl-2-acetyl-sn-glycero-3-phosphocholine (platelet-activating factor or PAF) to 1-O-alkyl-sn-glycero-3-phosphocholine (lyso-PAF). Also catalyzes the transfer of the acetate group from PAF to 1-hexadecanoyl-sn-glycero-3-phosphocholine forming lyso-PAF. Catalyzes the esterification of (24S)-hydroxycholesterol (24(S)OH-C), also known as cerebrosterol to produce 24(S)OH-C monoesters. This chain is Phosphatidylcholine-sterol acyltransferase (Lcat), found in Rattus norvegicus (Rat).